Consider the following 438-residue polypeptide: MSTNFSVPEPTPQLVKVAESAKEASISLGQSTNKQRCEALTEMANALNDNADEILKANVQDLERSEKEGLNKSLLSRLQLTKTKLKGCIDGVLKVSNLADPIGKRQLHRELNENLILERVTVPLGVLGVIFESRPDALIQIASLAVRSGNGALLKGGSEAKDTNQAIMDSLDKGLRKANVGSGALSLLTTRQESLGLLRLDKFVNLIIPRGSNELVQFIQENTRIPVLGHADGICHLYVDNSVDIDKAISIALDSKIQYPAACNAIETLLIHEDIAEMFLKKGLPIFSSEGVTLKGDTKSQALGVKNKADESDWSKEYLDLILSIKIVRNVNEAIEHIRKYSSRHTEAIVTEDKMVAEKFLSSVDSAGVYHNCSTRFADGFRYGFGAEVGISTQTLPPRGPVGLEGLVTYRYYLRGDGDLVKDFASGDRSFSHIDLPL.

The protein belongs to the gamma-glutamyl phosphate reductase family.

It is found in the cytoplasm. The catalysed reaction is L-glutamate 5-semialdehyde + phosphate + NADP(+) = L-glutamyl 5-phosphate + NADPH + H(+). It functions in the pathway amino-acid biosynthesis; L-proline biosynthesis; L-glutamate 5-semialdehyde from L-glutamate: step 2/2. In terms of biological role, catalyzes the NADPH-dependent reduction of L-glutamate 5-phosphate into L-glutamate 5-semialdehyde and phosphate. The product spontaneously undergoes cyclization to form 1-pyrroline-5-carboxylate. The chain is Gamma-glutamyl phosphate reductase from Prochlorococcus marinus (strain NATL2A).